The primary structure comprises 1322 residues: Phosphoribosylformylglycinamidine synthase (1322 aa).

ATP is bound by residues 300–311 (GASTGAGGEIRD) and Ala-702. Mg(2+)-binding residues include Asp-703, Glu-742, Asn-746, and Asp-915. Ser-917 provides a ligand contact to ATP. Positions 1073–1322 (VAILREQGIN…LFRNARAWVG (250 aa)) constitute a Glutamine amidotransferase type-1 domain. Cys-1166 serves as the catalytic Nucleophile. Residues His-1287 and Glu-1289 contribute to the active site.

This sequence in the N-terminal section; belongs to the FGAMS family. Monomer.

It localises to the cytoplasm. It carries out the reaction N(2)-formyl-N(1)-(5-phospho-beta-D-ribosyl)glycinamide + L-glutamine + ATP + H2O = 2-formamido-N(1)-(5-O-phospho-beta-D-ribosyl)acetamidine + L-glutamate + ADP + phosphate + H(+). The protein operates within purine metabolism; IMP biosynthesis via de novo pathway; 5-amino-1-(5-phospho-D-ribosyl)imidazole from N(2)-formyl-N(1)-(5-phospho-D-ribosyl)glycinamide: step 1/2. Functionally, phosphoribosylformylglycinamidine synthase involved in the purines biosynthetic pathway. Catalyzes the ATP-dependent conversion of formylglycinamide ribonucleotide (FGAR) and glutamine to yield formylglycinamidine ribonucleotide (FGAM) and glutamate. This is Phosphoribosylformylglycinamidine synthase from Xylella fastidiosa (strain Temecula1 / ATCC 700964).